The chain runs to 335 residues: Fructose-1,6-bisphosphatase class 1 (335 aa).

Mg(2+) is bound by residues E92, D114, L116, and D117. Substrate is bound by residues 117-120 (DGSS), N209, and K275. E281 contacts Mg(2+).

The protein belongs to the FBPase class 1 family. Homotetramer. The cofactor is Mg(2+).

It localises to the cytoplasm. The catalysed reaction is beta-D-fructose 1,6-bisphosphate + H2O = beta-D-fructose 6-phosphate + phosphate. Its pathway is carbohydrate biosynthesis; gluconeogenesis. This chain is Fructose-1,6-bisphosphatase class 1, found in Polaromonas sp. (strain JS666 / ATCC BAA-500).